Reading from the N-terminus, the 174-residue chain is Flavodoxin (174 aa).

The Flavodoxin-like domain occupies 4–165 (VGLFYGSDTG…RVEKWCKQIY (162 aa)).

Belongs to the flavodoxin family. The cofactor is FMN.

Functionally, low-potential electron donor to a number of redox enzymes. In Haemophilus influenzae (strain ATCC 51907 / DSM 11121 / KW20 / Rd), this protein is Flavodoxin (fldA).